The primary structure comprises 369 residues: H-2 class I histocompatibility antigen, K-B alpha chain (369 aa).

An N-terminal signal peptide occupies residues 1 to 21; the sequence is MVPCTLLLLLAAALAPTQTRA. The tract at residues 22 to 111 is alpha-1; sequence GPHSLRYFVT…LLGYYNQSKG (90 aa). The Extracellular portion of the chain corresponds to 22 to 305; that stretch reads GPHSLRYFVT…EPPPSTVSNM (284 aa). Residue Asn107 is glycosylated (N-linked (GlcNAc...) asparagine). The interval 112–203 is alpha-2; that stretch reads GSHTIQVISG…KNGNATLLRT (92 aa). The cysteines at positions 122 and 185 are disulfide-linked. The N-linked (GlcNAc...) asparagine glycan is linked to Asn197. The tract at residues 204–295 is alpha-3; it reads DSPKAHVTHH…GLPEPLTLRW (92 aa). In terms of domain architecture, Ig-like C1-type spans 206-294; it reads PKAHVTHHSR…QGLPEPLTLR (89 aa). Cys224 and Cys280 are oxidised to a cystine. The tract at residues 296–305 is connecting peptide; sequence EPPPSTVSNM. Residues 306–328 traverse the membrane as a helical segment; that stretch reads ATVAVLVVLGAAIVTGAVVAFVM. At 329–369 the chain is on the cytoplasmic side; the sequence is KMRRRNTGGKGGDYALAPGSQTSDLSLPDCKVMVHDPHSLA. Residues Ser351 and Ser354 each carry the phosphoserine modification.

It belongs to the MHC class I family. Heterodimer of an alpha chain and a beta chain (beta-2-microglobulin).

The protein resides in the membrane. Functionally, involved in the presentation of foreign antigens to the immune system. This Mus musculus (Mouse) protein is H-2 class I histocompatibility antigen, K-B alpha chain (H2-K1).